A 351-amino-acid chain; its full sequence is Beta-hexosaminidase (351 aa).

Substrate is bound by residues aspartate 62, arginine 70, arginine 134, and 164–165 (KH). The Proton donor/acceptor role is filled by histidine 177. Aspartate 249 acts as the Nucleophile in catalysis.

The protein belongs to the glycosyl hydrolase 3 family. NagZ subfamily. As to quaternary structure, monomer.

The protein localises to the cytoplasm. It catalyses the reaction Hydrolysis of terminal non-reducing N-acetyl-D-hexosamine residues in N-acetyl-beta-D-hexosaminides.. It participates in cell wall biogenesis; peptidoglycan recycling. In terms of biological role, plays a role in peptidoglycan recycling by cleaving the terminal beta-1,4-linked N-acetylglucosamine (GlcNAc) from peptide-linked peptidoglycan fragments, giving rise to free GlcNAc, anhydro-N-acetylmuramic acid and anhydro-N-acetylmuramic acid-linked peptides. The protein is Beta-hexosaminidase of Pasteurella multocida (strain Pm70).